A 243-amino-acid polypeptide reads, in one-letter code: 7-cyano-7-deazaguanine synthase (243 aa).

Phe-9–Leu-19 is an ATP binding site. Residues Cys-205, Cys-220, Cys-223, and Cys-226 each coordinate Zn(2+).

This sequence belongs to the QueC family. The cofactor is Zn(2+).

The catalysed reaction is 7-carboxy-7-deazaguanine + NH4(+) + ATP = 7-cyano-7-deazaguanine + ADP + phosphate + H2O + H(+). It participates in purine metabolism; 7-cyano-7-deazaguanine biosynthesis. In terms of biological role, catalyzes the ATP-dependent conversion of 7-carboxy-7-deazaguanine (CDG) to 7-cyano-7-deazaguanine (preQ(0)). This chain is 7-cyano-7-deazaguanine synthase, found in Albidiferax ferrireducens (strain ATCC BAA-621 / DSM 15236 / T118) (Rhodoferax ferrireducens).